A 600-amino-acid polypeptide reads, in one-letter code: Albumin (600 aa).

The N-terminal stretch at 1–10 is a signal peptide; sequence LLFLFSSAYS. The propeptide occupies 11–16; it reads RGVFRR. 3 Albumin domains span residues 11–202, 203–395, and 396–593; these read RGVF…DELR, DEGK…EFQP, and LVEE…KFVA. Residue histidine 19 coordinates Cu cation. Serine 21 carries the post-translational modification Phosphoserine. Positions 22 and 29 each coordinate Ca(2+). The cysteines at positions 69 and 78 are disulfide-linked. 2 positions are modified to phosphoserine: serine 74 and serine 81. Histidine 83 contributes to the Zn(2+) binding site. Disulfide bonds link cysteine 91-cysteine 107, cysteine 106-cysteine 117, cysteine 140-cysteine 185, cysteine 184-cysteine 193, cysteine 216-cysteine 262, and cysteine 261-cysteine 269. A Phosphothreonine modification is found at threonine 99. Residue lysine 221 is modified to N6-succinyllysine. A (4Z,15Z)-bilirubin IXalpha-binding site is contributed by lysine 256. Ca(2+) is bound at residue glutamate 260. The Zn(2+) site is built by histidine 263 and aspartate 265. 4 residues coordinate Ca(2+): aspartate 265, glutamate 268, aspartate 271, and aspartate 275. Disulfide bonds link cysteine 281–cysteine 295, cysteine 294–cysteine 305, cysteine 332–cysteine 377, cysteine 376–cysteine 385, cysteine 408–cysteine 454, cysteine 453–cysteine 464, cysteine 477–cysteine 493, and cysteine 492–cysteine 503. Serine 289 is modified (phosphoserine). Serine 435 is modified (phosphoserine). Phosphothreonine occurs at positions 436 and 438. N6-succinyllysine is present on lysine 452. Serine 505 is subject to Phosphoserine. 2 disulfides stabilise this stretch: cysteine 530–cysteine 575 and cysteine 574–cysteine 583. N6-succinyllysine is present on lysine 535. Lysine 550 carries the post-translational modification N6-methyllysine. Residue lysine 580 is modified to N6-succinyllysine.

The protein belongs to the ALB/AFP/VDB family. In terms of assembly, interacts with FCGRT; this interaction regulates ALB homeostasis. Interacts with TASOR. In plasma, occurs in a covalently-linked complex with chromophore-bound alpha-1-microglobulin; this interaction does not prevent fatty acid binding to ALB. Phosphorylated by FAM20C in the extracellular medium. Plasma.

The protein resides in the secreted. Functionally, binds water, Ca(2+), Na(+), K(+), fatty acids, hormones, bilirubin and drugs. Its main function is the regulation of the colloidal osmotic pressure of blood. Major zinc transporter in plasma, typically binds about 80% of all plasma zinc. Major calcium and magnesium transporter in plasma, binds approximately 45% of circulating calcium and magnesium in plasma. Potentially has more than two calcium-binding sites and might additionally bind calcium in a non-specific manner. The shared binding site between zinc and calcium at residue Asp-265 suggests a crosstalk between zinc and calcium transport in the blood. The rank order of affinity is zinc &gt; calcium &gt; magnesium. Binds to the bacterial siderophore enterobactin and inhibits enterobactin-mediated iron uptake of E.coli from ferric transferrin, and may thereby limit the utilization of iron and growth of enteric bacteria such as E.coli. Does not prevent iron uptake by the bacterial siderophore aerobactin. The chain is Albumin (ALB) from Macaca mulatta (Rhesus macaque).